We begin with the raw amino-acid sequence, 455 residues long: Bifunctional protein GlmU (455 aa).

The pyrophosphorylase stretch occupies residues 1 to 226 (MSLDIVILAA…AMEVQGANDR (226 aa)). UDP-N-acetyl-alpha-D-glucosamine is bound by residues 8-11 (LAAG), Lys-22, Gln-73, 78-79 (GT), 99-101 (YGD), Gly-136, Glu-151, Asn-166, and Asn-224. Asp-101 serves as a coordination point for Mg(2+). Residue Asn-224 coordinates Mg(2+). A linker region spans residues 227-247 (KQLSELERHYQLREARRLMAA). Residues 248 to 455 (GVTLRDPSRF…WKRPVKITKD (208 aa)) are N-acetyltransferase. Residues Arg-330 and Lys-348 each contribute to the UDP-N-acetyl-alpha-D-glucosamine site. Catalysis depends on His-360, which acts as the Proton acceptor. The UDP-N-acetyl-alpha-D-glucosamine site is built by Tyr-363 and Asn-374. Acetyl-CoA contacts are provided by residues Ala-377, 383 to 384 (NY), Ser-402, Ala-420, and Arg-437.

This sequence in the N-terminal section; belongs to the N-acetylglucosamine-1-phosphate uridyltransferase family. It in the C-terminal section; belongs to the transferase hexapeptide repeat family. In terms of assembly, homotrimer. Requires Mg(2+) as cofactor.

The protein resides in the cytoplasm. It carries out the reaction alpha-D-glucosamine 1-phosphate + acetyl-CoA = N-acetyl-alpha-D-glucosamine 1-phosphate + CoA + H(+). The enzyme catalyses N-acetyl-alpha-D-glucosamine 1-phosphate + UTP + H(+) = UDP-N-acetyl-alpha-D-glucosamine + diphosphate. Its pathway is nucleotide-sugar biosynthesis; UDP-N-acetyl-alpha-D-glucosamine biosynthesis; N-acetyl-alpha-D-glucosamine 1-phosphate from alpha-D-glucosamine 6-phosphate (route II): step 2/2. It participates in nucleotide-sugar biosynthesis; UDP-N-acetyl-alpha-D-glucosamine biosynthesis; UDP-N-acetyl-alpha-D-glucosamine from N-acetyl-alpha-D-glucosamine 1-phosphate: step 1/1. The protein operates within bacterial outer membrane biogenesis; LPS lipid A biosynthesis. Its function is as follows. Catalyzes the last two sequential reactions in the de novo biosynthetic pathway for UDP-N-acetylglucosamine (UDP-GlcNAc). The C-terminal domain catalyzes the transfer of acetyl group from acetyl coenzyme A to glucosamine-1-phosphate (GlcN-1-P) to produce N-acetylglucosamine-1-phosphate (GlcNAc-1-P), which is converted into UDP-GlcNAc by the transfer of uridine 5-monophosphate (from uridine 5-triphosphate), a reaction catalyzed by the N-terminal domain. This chain is Bifunctional protein GlmU, found in Pseudomonas syringae pv. tomato (strain ATCC BAA-871 / DC3000).